Reading from the N-terminus, the 328-residue chain is MELLIQPNNRIIPFSAGANLLEVLRENGVAISYSCLSGRCGTCRCRVIDGSVIDSGAENGQSNLTDKQYVLACQSVLTGNCAIEVPEADEIVTHPARIIKGTVVAVESPTHDIRRLRVRLSKPFEFSPGQYATLQFSPEHARPYSMAGLPDDQEMEFHIRKVPGGRVTEYVFEHVREGTSIKLSGPLGTAYLRQKHTGPMLCVGGGTGLAPVLSIVRGALKSGMTNPILLYFGVRSQQDLYDAERLHKLAADHPQLTVHTVIATGPINEGQRAGLITDVIEKDILSLAGWRAYLCGAPAMVEALCTVTKHLGISPEHIYADAFYPGGI.

Positions 1-89 constitute a 2Fe-2S ferredoxin-type domain; that stretch reads MELLIQPNNR…NCAIEVPEAD (89 aa). Residues C35, C40, C43, and C73 each coordinate [2Fe-2S] cluster. One can recognise an FAD-binding FR-type domain in the interval 96–193; the sequence is ARIIKGTVVA…SGPLGTAYLR (98 aa).

The protein belongs to the bacterial ring-hydroxylating dioxygenase ferredoxin reductase component family. In terms of assembly, the naphthalene dioxygenase (NDO) multicomponent enzyme system is composed of an electron transfer component and a dioxygenase component (iron sulfur protein (ISP)). The electron transfer component is composed of a ferredoxin reductase (NdoR) and a ferredoxin (NdoA), and the dioxygenase component is formed of a heterohexamer (trimer of heterodimers) of three large alpha subunits (NdoB) and three small beta subunits (NdoC). [2Fe-2S] cluster is required as a cofactor. It depends on FAD as a cofactor.

The enzyme catalyses 2 reduced [2Fe-2S]-[ferredoxin] + NAD(+) + H(+) = 2 oxidized [2Fe-2S]-[ferredoxin] + NADH. The catalysed reaction is 2 reduced [2Fe-2S]-[ferredoxin] + NADP(+) + H(+) = 2 oxidized [2Fe-2S]-[ferredoxin] + NADPH. It participates in aromatic compound metabolism; naphthalene degradation. Strongly inhibited by p-chloromercuribenzoate. Also inhibited by N-ethylmaleimide and o-phenanthroline. In terms of biological role, component of the naphthalene dioxygenase (NDO) multicomponent enzyme system which catalyzes the incorporation of both atoms of molecular oxygen into naphthalene to form cis-(1R,2S)-dihydroxy-1,2-dihydronaphthalene. Ferredoxin reductase catalyzes the transfer of electrons from NADH to ferredoxin (NdoA). NADPH is also effective but yields only 39% of the activity obtained with NADH. Also able to catalyze the cis-dihydroxylation of biphenyl and phenanthrene. This is Naphthalene 1,2-dioxygenase system ferredoxin--NAD(P)(+), reductase component (ndoR) from Pseudomonas putida (Arthrobacter siderocapsulatus).